A 198-amino-acid chain; its full sequence is MERFILDTSVFTNPDTFNQFARDAVEATRIFLQLARRADAEFFIPGSVYEEFRLMKDLASLGGDFESVVKIRSPRRYSLTIPSEFLYELIHEVRHRIDRGLRIAEEHARMAAQPGTVADQGALITRLRERYRETLRRGIVDSREDIDVLLLAYELDGVLLSADEGLRKWADKVGVKIILPQHLRRVLENLTSCSRPQK.

It belongs to the HARP family.

The catalysed reaction is Endonucleolytic cleavage of RNA, removing 5'-extranucleotides from tRNA precursor.. Its function is as follows. RNA-free RNase P that catalyzes the removal of the 5'-leader sequence from pre-tRNA to produce the mature 5'-terminus. The chain is RNA-free ribonuclease P from Nitrosococcus oceani (strain ATCC 19707 / BCRC 17464 / JCM 30415 / NCIMB 11848 / C-107).